A 360-amino-acid chain; its full sequence is Phospho-N-acetylmuramoyl-pentapeptide-transferase (360 aa).

A run of 10 helical transmembrane segments spans residues 24–44 (RAVMAALTALAFSLMFGPWTI), 69–89 (GTPTMGGSLILTAITVSTLLW), 92–112 (WANPYIWILLGVLLATGALGF), 133–153 (MVWQSSVAVIAGLALFYLAAN), 158–178 (ILIVPFFKQIALPLGVVGFLV), 199–219 (GLAAFPVVLVAAGLAIFAYVS), 239–259 (VAIFCTAMCGACLGFLWFNAY), 263–283 (VFMGDVGALALGAALGTVAVI), 288–308 (FVLVIMGGLFVVEAVSVMLQV), and 337–357 (QVVVRFWIITIVLVLIGLSTL).

The protein belongs to the glycosyltransferase 4 family. MraY subfamily. The cofactor is Mg(2+).

Its subcellular location is the cell inner membrane. The catalysed reaction is UDP-N-acetyl-alpha-D-muramoyl-L-alanyl-gamma-D-glutamyl-meso-2,6-diaminopimeloyl-D-alanyl-D-alanine + di-trans,octa-cis-undecaprenyl phosphate = di-trans,octa-cis-undecaprenyl diphospho-N-acetyl-alpha-D-muramoyl-L-alanyl-D-glutamyl-meso-2,6-diaminopimeloyl-D-alanyl-D-alanine + UMP. It participates in cell wall biogenesis; peptidoglycan biosynthesis. Catalyzes the initial step of the lipid cycle reactions in the biosynthesis of the cell wall peptidoglycan: transfers peptidoglycan precursor phospho-MurNAc-pentapeptide from UDP-MurNAc-pentapeptide onto the lipid carrier undecaprenyl phosphate, yielding undecaprenyl-pyrophosphoryl-MurNAc-pentapeptide, known as lipid I. In Neisseria gonorrhoeae (strain ATCC 700825 / FA 1090), this protein is Phospho-N-acetylmuramoyl-pentapeptide-transferase.